The following is a 63-amino-acid chain: Potassium channel toxin Sp4 (63 aa).

Positions 1-20 (MNKVHFALFLLVLTVLAVSG) are cleaved as a signal peptide. Intrachain disulfides connect cysteine 31-cysteine 53, cysteine 38-cysteine 58, and cysteine 42-cysteine 60.

Belongs to the long chain scorpion toxin family. Class 2 subfamily. As to expression, expressed by the venom gland.

The protein resides in the secreted. Its function is as follows. This recombinant toxin selectively inhibits mouse voltage-gated potassium channel Kv1.3/KCNA3 (IC(50)=24.73 nM). This Scorpiops pococki (Scorpion) protein is Potassium channel toxin Sp4.